A 281-amino-acid chain; its full sequence is NADPH-dependent 7-cyano-7-deazaguanine reductase (281 aa).

87-89 contributes to the substrate binding site; the sequence is IES. 89-90 contributes to the NADPH binding site; that stretch reads SK. The active-site Thioimide intermediate is the C188. D195 functions as the Proton donor in the catalytic mechanism. Substrate is bound at residue 227–228; that stretch reads HE. 256–257 lines the NADPH pocket; that stretch reads RG.

This sequence belongs to the GTP cyclohydrolase I family. QueF type 2 subfamily. Homodimer.

The protein resides in the cytoplasm. The enzyme catalyses 7-aminomethyl-7-carbaguanine + 2 NADP(+) = 7-cyano-7-deazaguanine + 2 NADPH + 3 H(+). It participates in tRNA modification; tRNA-queuosine biosynthesis. Functionally, catalyzes the NADPH-dependent reduction of 7-cyano-7-deazaguanine (preQ0) to 7-aminomethyl-7-deazaguanine (preQ1). The polypeptide is NADPH-dependent 7-cyano-7-deazaguanine reductase (Photobacterium profundum (strain SS9)).